Consider the following 491-residue polypeptide: Probable cytosol aminopeptidase (491 aa).

The Mn(2+) site is built by Lys260 and Asp265. Lys272 is an active-site residue. 3 residues coordinate Mn(2+): Asp284, Asp343, and Glu345. Arg347 is a catalytic residue.

This sequence belongs to the peptidase M17 family. It depends on Mn(2+) as a cofactor.

The protein localises to the cytoplasm. The enzyme catalyses Release of an N-terminal amino acid, Xaa-|-Yaa-, in which Xaa is preferably Leu, but may be other amino acids including Pro although not Arg or Lys, and Yaa may be Pro. Amino acid amides and methyl esters are also readily hydrolyzed, but rates on arylamides are exceedingly low.. It catalyses the reaction Release of an N-terminal amino acid, preferentially leucine, but not glutamic or aspartic acids.. In terms of biological role, presumably involved in the processing and regular turnover of intracellular proteins. Catalyzes the removal of unsubstituted N-terminal amino acids from various peptides. The sequence is that of Probable cytosol aminopeptidase from Trichormus variabilis (strain ATCC 29413 / PCC 7937) (Anabaena variabilis).